Reading from the N-terminus, the 388-residue chain is Protein YnjB (388 aa).

The segment at 333–357 (AVWGDPSVLDPQKLPDGQRESLQSR) is disordered.

This Escherichia coli (strain K12) protein is Protein YnjB (ynjB).